Reading from the N-terminus, the 527-residue chain is Pyruvate kinase 1, cytosolic (527 aa).

Arginine 58 provides a ligand contact to substrate. Positions 60, 62, 92, and 93 each coordinate K(+). 60–63 (DFSW) provides a ligand contact to ATP. Lysine 256 provides a ligand contact to substrate. Mg(2+) is bound at residue glutamate 258. Residues glycine 281, asparagine 282, and threonine 313 each contribute to the substrate site. Position 282 (asparagine 282) interacts with Mg(2+).

The protein belongs to the pyruvate kinase family. In terms of assembly, homotetramer. Mg(2+) is required as a cofactor. The cofactor is K(+).

It is found in the cytoplasm. The protein localises to the cytosol. It catalyses the reaction pyruvate + ATP = phosphoenolpyruvate + ADP + H(+). Its pathway is carbohydrate degradation; glycolysis; pyruvate from D-glyceraldehyde 3-phosphate: step 5/5. In terms of biological role, key regulatory enzyme of the glycolytic pathway that catalyzes the final step of glycolysis, converting ADP and phosphoenolpyruvate (PEP) to ATP and pyruvate by essentially irreversible transphosphorylation. Is critical for plant growth and development. In Oryza sativa subsp. indica (Rice), this protein is Pyruvate kinase 1, cytosolic.